Consider the following 479-residue polypeptide: Ribosomal RNA small subunit methyltransferase F (479 aa).

S-adenosyl-L-methionine-binding positions include 125 to 131 (AAAPGSK), E149, D176, and D194. The active-site Nucleophile is the C247.

This sequence belongs to the class I-like SAM-binding methyltransferase superfamily. RsmB/NOP family.

It is found in the cytoplasm. The enzyme catalyses cytidine(1407) in 16S rRNA + S-adenosyl-L-methionine = 5-methylcytidine(1407) in 16S rRNA + S-adenosyl-L-homocysteine + H(+). Its function is as follows. Specifically methylates the cytosine at position 1407 (m5C1407) of 16S rRNA. The protein is Ribosomal RNA small subunit methyltransferase F of Salmonella paratyphi A (strain ATCC 9150 / SARB42).